We begin with the raw amino-acid sequence, 227 residues long: Probable septum site-determining protein MinC (227 aa).

This sequence belongs to the MinC family. Interacts with MinD and FtsZ.

Cell division inhibitor that blocks the formation of polar Z ring septums. Rapidly oscillates between the poles of the cell to destabilize FtsZ filaments that have formed before they mature into polar Z rings. Prevents FtsZ polymerization. This is Probable septum site-determining protein MinC from Shouchella clausii (strain KSM-K16) (Alkalihalobacillus clausii).